Reading from the N-terminus, the 483-residue chain is Spermatogenesis-defective protein 39 homolog (483 aa).

The protein belongs to the SPE39 family. In terms of assembly, interacts with vps33b. In terms of tissue distribution, high levels detected in liver and small intestine of larvae at 5 days post-fertilization.

The protein resides in the cytoplasm. It localises to the cytoplasmic vesicle. The protein localises to the early endosome. It is found in the recycling endosome. Its subcellular location is the late endosome. Functionally, proposed to be involved in endosomal maturation implicating in part vps33b. In epithelial cells, the vps33b:vipas39 complex may play a role in the apical rab11a-dependent recycling pathway and in the maintenance of the apical-basolateral polarity. May play a role in lysosomal trafficking, probably via association with the core HOPS complex in a discrete population of endosomes; the functions seems to be independent of vps33b. May play a role in vesicular trafficking during spermatogenesis. May be involved in direct or indirect transcriptional regulation of E-cadherin. This is Spermatogenesis-defective protein 39 homolog (vipas39) from Danio rerio (Zebrafish).